Here is a 126-residue protein sequence, read N- to C-terminus: MKKDKKYQIEAIKNKDKTLFIVYATDIYSPSEFFSKIESDLKKKKSKGDVFFDLIIPNGGKKDRYVYTSFNGEKFSSYTLNKVTKTDEYNDLSELSASFFKKNFDKINVNLLSKATSFALKKGIPI.

As to quaternary structure, can form a complex with cognate toxin LsoA.

In terms of biological role, antitoxin component of a type II toxin-antitoxin (TA) system. A labile antitoxin (half-life of 5.9 minutes) that inhibits the endonuclease activity of cognate toxin LsoA but not that of non-cognate toxin RnlA. The chain is Antitoxin LsoB (lsoB) from Escherichia coli O157:H7.